The primary structure comprises 170 residues: Large ribosomal subunit protein uL10 (170 aa).

The protein belongs to the universal ribosomal protein uL10 family. As to quaternary structure, part of the ribosomal stalk of the 50S ribosomal subunit. The N-terminus interacts with L11 and the large rRNA to form the base of the stalk. The C-terminus forms an elongated spine to which L12 dimers bind in a sequential fashion forming a multimeric L10(L12)X complex.

In terms of biological role, forms part of the ribosomal stalk, playing a central role in the interaction of the ribosome with GTP-bound translation factors. The sequence is that of Large ribosomal subunit protein uL10 from Nitratiruptor sp. (strain SB155-2).